Reading from the N-terminus, the 78-residue chain is uncharacterized protein (78 aa).

The segment at 20–78 is disordered; sequence LQDLFPPHFGNEEADEDDEDGDKYGDDDGEFYGDNDGDNDGDNDGVNDGVGDGPPSTLL. The segment covering 31–64 has biased composition (acidic residues); sequence EEADEDDEDGDKYGDDDGEFYGDNDGDNDGDNDG.

This is an uncharacterized protein from Dictyostelium discoideum (Social amoeba).